We begin with the raw amino-acid sequence, 239 residues long: Serine protease SplD (239 aa).

The first 36 residues, 1–36 (MNKNIIIKSIAALTILTSITGVGTTVVDGIQQTAKA), serve as a signal peptide directing secretion. Residues histidine 75, aspartate 114, and serine 192 each act as charge relay system in the active site.

It belongs to the peptidase S1B family.

It localises to the secreted. In Staphylococcus aureus (strain Mu3 / ATCC 700698), this protein is Serine protease SplD (splD).